Reading from the N-terminus, the 1316-residue chain is DNA-directed RNA polymerase subunit beta' (1316 aa).

Positions 60, 62, 75, and 78 each coordinate Zn(2+). 3 residues coordinate Mg(2+): D535, D537, and D539. C891, C968, C975, and C978 together coordinate Zn(2+).

It belongs to the RNA polymerase beta' chain family. The RNAP catalytic core consists of 2 alpha, 1 beta, 1 beta' and 1 omega subunit. When a sigma factor is associated with the core the holoenzyme is formed, which can initiate transcription. The cofactor is Mg(2+). Zn(2+) serves as cofactor.

The catalysed reaction is RNA(n) + a ribonucleoside 5'-triphosphate = RNA(n+1) + diphosphate. DNA-dependent RNA polymerase catalyzes the transcription of DNA into RNA using the four ribonucleoside triphosphates as substrates. The polypeptide is DNA-directed RNA polymerase subunit beta' (Mycobacterium bovis (strain BCG / Tokyo 172 / ATCC 35737 / TMC 1019)).